A 441-amino-acid polypeptide reads, in one-letter code: Protein kinase C and casein kinase substrate in neurons protein 1 (441 aa).

Phosphoserine is present on residues serine 2 and serine 76. Residues 10–280 (EEITDSFWEV…AIRGADAQED (271 aa)) form the F-BAR domain. Positions 23–272 (KRTVKRIDDG…HVYRELEQAI (250 aa)) form a coiled coil. Threonine 181 carries the post-translational modification Phosphothreonine. The disordered stretch occupies residues 310–380 (AAKKEKQPKK…ANGGANPFED (71 aa)). The span at 311–321 (AKKEKQPKKAE) shows a compositional bias: basic and acidic residues. The span at 326–348 (SNATGAVESTSQAGDRGSVSSYD) shows a compositional bias: polar residues. 5 positions are modified to phosphoserine: serine 343, serine 345, serine 346, serine 358, and serine 362. The SH3 domain occupies 382–441 (AKGVRVRALYDYDGQEQDELSFKAGDELTKLGEEDEQGWCRGRLDSGQLGLYPANYVEAI). Tyrosine 391 is subject to Phosphotyrosine. Phosphoserine is present on residues serine 402 and serine 427.

This sequence belongs to the PACSIN family. In terms of assembly, homodimer. May form heterooligomers with other PACSINs. Interacts with MAPT. Interacts with TRPV4. Interacts (via SH3 domain) with SYNJ1 and WASL. Interacts (via SH3 domain) with DNM1; the interaction is reduced by DNM1 phosphorylation. Interacts with DNM2 and DNM3. Interacts with both COBL and DBNL. Identified in a complex composed of COBL, PACSIN1 and WASL. Interacts with EHD1 and EHD3. Post-translationally, phosphorylated by casein kinase 2 (CK2) and protein kinase C (PKC). Highly expressed in brain (at protein level).

The protein localises to the cytoplasm. The protein resides in the cell projection. Its subcellular location is the synapse. It localises to the synaptosome. It is found in the ruffle membrane. The protein localises to the membrane. The protein resides in the cytoplasmic vesicle membrane. Its subcellular location is the cytosol. It localises to the cell membrane. In terms of biological role, binds to membranes via its F-BAR domain and mediates membrane tubulation. Plays a role in the reorganization of the microtubule cytoskeleton via its interaction with MAPT; this decreases microtubule stability and inhibits MAPT-induced microtubule polymerization. Plays a role in cellular transport processes by recruiting DNM1, DNM2 and DNM3 to membranes. Plays a role in the reorganization of the actin cytoskeleton and in neuron morphogenesis via its interaction with COBL and WASL, and by recruiting COBL to the cell cortex. Plays a role in the regulation of neurite formation, neurite branching and the regulation of neurite length. Required for normal synaptic vesicle endocytosis; this process retrieves previously released neurotransmitters to accommodate multiple cycles of neurotransmission. Required for normal excitatory and inhibitory synaptic transmission. This Rattus norvegicus (Rat) protein is Protein kinase C and casein kinase substrate in neurons protein 1 (Pacsin1).